The sequence spans 147 residues: Hemoglobin subunit gamma (147 aa).

The 145-residue stretch at His3–His147 folds into the Globin domain. Positions 64 and 93 each coordinate heme b.

The protein belongs to the globin family. Heterotetramer of two alpha chains and two gamma chains in fetal hemoglobin (Hb F). Red blood cells.

Gamma chains make up the fetal hemoglobin F, in combination with alpha chains. This is Hemoglobin subunit gamma (HBG) from Cephalopachus bancanus (Western tarsier).